Here is a 769-residue protein sequence, read N- to C-terminus: CO(2)-response secreted protease (769 aa).

Residues 1-27 (MKGITFFTPFLSFLYLLCILFMTETEA) form the signal peptide. The Inhibitor I9 domain maps to 35 to 108 (VYIVYMGSAS…VFPDPHFQLH (74 aa)). The 502-residue stretch at 112–613 (SWDFLKYQTS…AGELSSTASM (502 aa)) folds into the Peptidase S8 domain. Residues aspartate 145 and histidine 210 each act as charge relay system in the active site. The PA domain occupies 381–465 (ADASEGSARA…SKEAAEIFSY (85 aa)). Serine 546 functions as the Charge relay system in the catalytic mechanism.

Belongs to the peptidase S8 family. Expressed in roots, guard cells and meristemoid and pavement cells.

The protein resides in the secreted. It is found in the cell wall. The enzyme catalyses Release of an N-terminal tripeptide from a polypeptide.. In terms of biological role, mediates CO(2)-controlled stomatal development by cleaving peptide EPF2 (AC Q8LC53). Not active on peptides EPF1 (AC Q8S8I4) or stomagen (AC Q9SV72). The polypeptide is CO(2)-response secreted protease (Arabidopsis thaliana (Mouse-ear cress)).